The following is a 461-amino-acid chain: Cysteine--tRNA ligase (461 aa).

C29 lines the Zn(2+) pocket. Residues 31–41 (PTVYNYAHIGN) carry the 'HIGH' region motif. Residues C214, H239, and E243 each coordinate Zn(2+). The 'KMSKS' region motif lies at 271-275 (KMSKS). Position 274 (K274) interacts with ATP.

This sequence belongs to the class-I aminoacyl-tRNA synthetase family. Monomer. Requires Zn(2+) as cofactor.

The protein resides in the cytoplasm. The catalysed reaction is tRNA(Cys) + L-cysteine + ATP = L-cysteinyl-tRNA(Cys) + AMP + diphosphate. The chain is Cysteine--tRNA ligase from Hyphomonas neptunium (strain ATCC 15444).